A 205-amino-acid polypeptide reads, in one-letter code: Outer-membrane lipoprotein carrier protein (205 aa).

The first 19 residues, M1–A19, serve as a signal peptide directing secretion.

This sequence belongs to the LolA family. In terms of assembly, monomer.

The protein localises to the periplasm. In terms of biological role, participates in the translocation of lipoproteins from the inner membrane to the outer membrane. Only forms a complex with a lipoprotein if the residue after the N-terminal Cys is not an aspartate (The Asp acts as a targeting signal to indicate that the lipoprotein should stay in the inner membrane). In Francisella tularensis subsp. holarctica (strain LVS), this protein is Outer-membrane lipoprotein carrier protein.